Here is a 158-residue protein sequence, read N- to C-terminus: MKCPYCGYPDSKVIDSRPTDDNTSIRRRRECLKCGKRFTTYEKVEQLPILVIKKDNRREVYDRDKILKGMIKACEKRPVPIKVLEEITDEIDKRIINSMEREITSTEIGEMVMEKLKNVDEVAYVRFASVYRQFKDINTFMDELKKLLKESETKKENA.

Residues 3 to 34 fold into a zinc finger; the sequence is CPYCGYPDSKVIDSRPTDDNTSIRRRRECLKC. The ATP-cone domain occupies 49–139; the sequence is ILVIKKDNRR…VYRQFKDINT (91 aa).

The protein belongs to the NrdR family. Zn(2+) is required as a cofactor.

Negatively regulates transcription of bacterial ribonucleotide reductase nrd genes and operons by binding to NrdR-boxes. This is Transcriptional repressor NrdR from Thermoanaerobacter sp. (strain X514).